A 181-amino-acid polypeptide reads, in one-letter code: MAEKRELATFAGGCFWCMVKPFDEQPGILKVESGYTGGHTENPTYEEVCSNTTGHREAVQITFDPDVFPYEKLLELYWQQIDPTDSGGQFTDRGESYRTAIFYHNDKQRKLAEESKKKLGESGIFKDPIATDILEAGPFYPAEEYHQDYHKKHPERYTQYRIGSGREGFLQQHWGRKHDEQ.

Cys14 is an active-site residue.

This sequence belongs to the MsrA Met sulfoxide reductase family.

The enzyme catalyses L-methionyl-[protein] + [thioredoxin]-disulfide + H2O = L-methionyl-(S)-S-oxide-[protein] + [thioredoxin]-dithiol. It carries out the reaction [thioredoxin]-disulfide + L-methionine + H2O = L-methionine (S)-S-oxide + [thioredoxin]-dithiol. Has an important function as a repair enzyme for proteins that have been inactivated by oxidation. Catalyzes the reversible oxidation-reduction of methionine sulfoxide in proteins to methionine. The chain is Peptide methionine sulfoxide reductase MsrA from Bacillus licheniformis (strain ATCC 14580 / DSM 13 / JCM 2505 / CCUG 7422 / NBRC 12200 / NCIMB 9375 / NCTC 10341 / NRRL NRS-1264 / Gibson 46).